The primary structure comprises 193 residues: Proton-translocating ferredoxin:NAD(+) oxidoreductase complex subunit A (193 aa).

Helical transmembrane passes span 11–31, 39–59, 62–82, 102–122, 134–154, and 171–191; these read AVVV…FFGV, VGMG…AWVV, FVLI…LLIA, MWGI…VPIL, VVNA…MASL, and GVAF…SGMI.

This sequence belongs to the NqrDE/RnfAE family. As to quaternary structure, the complex is composed of six subunits: RnfA, RnfB, RnfC, RnfD, RnfE and RnfG.

The protein localises to the cell membrane. In terms of biological role, part of a membrane-bound complex that couples electron transfer with translocation of ions across the membrane. Couples electron transfer from reduced ferredoxin to NAD(+) with translocation of H(+) out of the cell. Essential for energy conservation during autotrophic growth. Contributes to ATP synthesis during heterotrophic growth. The polypeptide is Proton-translocating ferredoxin:NAD(+) oxidoreductase complex subunit A (Clostridium ljungdahlii (strain ATCC 55383 / DSM 13528 / PETC)).